The sequence spans 396 residues: Small ribosomal subunit protein uS9m (396 aa).

Lysine 287 bears the N6-acetyllysine mark. The segment at 374-396 (PRVRERKKPGQEGARRKFTWKKR) is disordered.

The protein belongs to the universal ribosomal protein uS9 family. In terms of assembly, component of the mitochondrial small ribosomal subunit (mt-SSU). Mature mammalian 55S mitochondrial ribosomes consist of a small (28S) and a large (39S) subunit. The 28S small subunit contains a 12S ribosomal RNA (12S mt-rRNA) and 30 different proteins. The 39S large subunit contains a 16S rRNA (16S mt-rRNA), a copy of mitochondrial valine transfer RNA (mt-tRNA(Val)), which plays an integral structural role, and 52 different proteins.

It localises to the mitochondrion. In Homo sapiens (Human), this protein is Small ribosomal subunit protein uS9m (MRPS9).